Here is a 169-residue protein sequence, read N- to C-terminus: Anaerobic nitrite reductase NSHB3 (169 aa).

In terms of domain architecture, Globin spans 15–165 (RFTEEQEALV…LVAAIKQGMK (151 aa)). A Homodimerization motif is present at residues 48 to 52 (EVAPS). The heme b site is built by serine 58, lysine 72, histidine 76, arginine 106, threonine 110, and histidine 111. Positions 118-130 (DAHFEVAKFALLE) match the Homodimerization motif.

The protein belongs to the plant globin family. As to quaternary structure, homodimer. The cofactor is heme b.

It is found in the cytoplasm. Its subcellular location is the nucleus. The enzyme catalyses Fe(III)-heme b-[protein] + nitric oxide + H2O = Fe(II)-heme b-[protein] + nitrite + 2 H(+). Phytoglobin that reduces nitrite to nitric oxide under anoxic conditions (e.g. during flooding or in waterlogged soil). May not function as an oxygen storage or transport protein. Has an unusually high affinity for O(2) through an hexacoordinate heme iron because of a very low dissociation constant. This chain is Anaerobic nitrite reductase NSHB3, found in Oryza sativa subsp. indica (Rice).